A 197-amino-acid chain; its full sequence is NADH-quinone oxidoreductase subunit C (197 aa).

This sequence belongs to the complex I 30 kDa subunit family. As to quaternary structure, NDH-1 is composed of 14 different subunits. Subunits NuoB, C, D, E, F, and G constitute the peripheral sector of the complex.

The protein resides in the cell inner membrane. It catalyses the reaction a quinone + NADH + 5 H(+)(in) = a quinol + NAD(+) + 4 H(+)(out). NDH-1 shuttles electrons from NADH, via FMN and iron-sulfur (Fe-S) centers, to quinones in the respiratory chain. The immediate electron acceptor for the enzyme in this species is believed to be ubiquinone. Couples the redox reaction to proton translocation (for every two electrons transferred, four hydrogen ions are translocated across the cytoplasmic membrane), and thus conserves the redox energy in a proton gradient. This Methylobacillus flagellatus (strain ATCC 51484 / DSM 6875 / VKM B-1610 / KT) protein is NADH-quinone oxidoreductase subunit C.